The chain runs to 1845 residues: Proteasome adapter and scaffold protein ECM29 (1845 aa).

Residue Ala2 is modified to N-acetylalanine. HEAT repeat units follow at residues 28-65, 107-144, 162-205, 326-362, 387-426, 429-466, 469-507, 683-720, 721-759, 783-820, 829-868, 870-907, 931-969, 975-1012, 1013-1050, 1112-1149, 1152-1189, 1194-1231, 1243-1281, 1285-1323, 1348-1386, 1390-1427, 1517-1554, 1558-1595, 1605-1642, 1646-1683, and 1779-1822; these read TDEQ…LVHL, YPRL…LIPT, NLAE…QGSS, RDPV…YDGL, PEIK…VGKL, RMPH…LSMM, AYST…ASTV, YPEK…YSVV, VSTV…LGFT, TLPD…LGEI, PSEG…LGYF, VGDG…ITSA, AGAK…LLSL, THKE…LGLV, YELG…VVFQ, AGEQ…WNAL, DKSM…LNDL, PLDD…LKTL, KGAA…LVKI, AGAM…TEQE, LQYL…IVSL, CPQD…MGHL, SFGG…MASI, TSSL…IACV, KSVP…AADI, TKED…ENEK, and TYSS…LATM. The span at 193 to 207 shows a compositional bias: low complexity; it reads QSRQNSSSAQGSSSN. Residues 193 to 217 are disordered; it reads QSRQNSSSAQGSSSNSGGGSGIPQP. Position 830 is a phosphoserine (Ser830). Thr836 is modified (phosphothreonine). A Glycyl lysine isopeptide (Lys-Gly) (interchain with G-Cter in SUMO1) cross-link involves residue Lys1039.

It belongs to the ECM29 family. As to quaternary structure, non-stoichiometric component of the proteasome; associates with the 26S proteasome. Interacts (via N-terminus) with VPS11, VPS26A, VPS36, RAB11FIP4 and RABEP1. Interacts (via C-terminus) with DCTN1, DCTN2, KIF5B, MYH7, MYH10, MYO10 and ARF6.

It is found in the endoplasmic reticulum. It localises to the endoplasmic reticulum-Golgi intermediate compartment. Its subcellular location is the endosome. The protein resides in the cytoplasm. The protein localises to the cytoskeleton. It is found in the microtubule organizing center. It localises to the centrosome. Its subcellular location is the nucleus. The protein resides in the multivesicular body. The protein localises to the cytoplasmic vesicle. In terms of biological role, adapter/scaffolding protein that binds to the 26S proteasome, motor proteins and other compartment specific proteins. May couple the proteasome to different compartments including endosome, endoplasmic reticulum and centrosome. May play a role in ERAD and other enhanced proteolysis. Promotes proteasome dissociation under oxidative stress. The polypeptide is Proteasome adapter and scaffold protein ECM29 (Homo sapiens (Human)).